The following is a 156-amino-acid chain: Small ribosomal subunit protein uS7 (156 aa).

Belongs to the universal ribosomal protein uS7 family. Part of the 30S ribosomal subunit. Contacts proteins S9 and S11.

One of the primary rRNA binding proteins, it binds directly to 16S rRNA where it nucleates assembly of the head domain of the 30S subunit. Is located at the subunit interface close to the decoding center, probably blocks exit of the E-site tRNA. The chain is Small ribosomal subunit protein uS7 from Desulfatibacillum aliphaticivorans.